Consider the following 209-residue polypeptide: Thiamine-phosphate synthase (209 aa).

Residues 41–45 (QYRNK) and Asn-73 each bind 4-amino-2-methyl-5-(diphosphooxymethyl)pyrimidine. The Mg(2+) site is built by Asp-74 and Asp-93. Ser-112 provides a ligand contact to 4-amino-2-methyl-5-(diphosphooxymethyl)pyrimidine. Residue 139–141 (SST) coordinates 2-[(2R,5Z)-2-carboxy-4-methylthiazol-5(2H)-ylidene]ethyl phosphate. Lys-142 serves as a coordination point for 4-amino-2-methyl-5-(diphosphooxymethyl)pyrimidine. Gly-168 lines the 2-[(2R,5Z)-2-carboxy-4-methylthiazol-5(2H)-ylidene]ethyl phosphate pocket.

This sequence belongs to the thiamine-phosphate synthase family. The cofactor is Mg(2+).

It catalyses the reaction 2-[(2R,5Z)-2-carboxy-4-methylthiazol-5(2H)-ylidene]ethyl phosphate + 4-amino-2-methyl-5-(diphosphooxymethyl)pyrimidine + 2 H(+) = thiamine phosphate + CO2 + diphosphate. It carries out the reaction 2-(2-carboxy-4-methylthiazol-5-yl)ethyl phosphate + 4-amino-2-methyl-5-(diphosphooxymethyl)pyrimidine + 2 H(+) = thiamine phosphate + CO2 + diphosphate. The enzyme catalyses 4-methyl-5-(2-phosphooxyethyl)-thiazole + 4-amino-2-methyl-5-(diphosphooxymethyl)pyrimidine + H(+) = thiamine phosphate + diphosphate. The protein operates within cofactor biosynthesis; thiamine diphosphate biosynthesis; thiamine phosphate from 4-amino-2-methyl-5-diphosphomethylpyrimidine and 4-methyl-5-(2-phosphoethyl)-thiazole: step 1/1. Functionally, condenses 4-methyl-5-(beta-hydroxyethyl)thiazole monophosphate (THZ-P) and 2-methyl-4-amino-5-hydroxymethyl pyrimidine pyrophosphate (HMP-PP) to form thiamine monophosphate (TMP). This Methylobacillus flagellatus (strain ATCC 51484 / DSM 6875 / VKM B-1610 / KT) protein is Thiamine-phosphate synthase.